The primary structure comprises 729 residues: Solute carrier family 15 member 2 (729 aa).

Residues 1 to 34 form a disordered region; it reads MNPFQKNESKETLFSPVSTEEMLPGPPSPPKKST. Over 1-57 the chain is Cytoplasmic; the sequence is MNPFQKNESKETLFSPVSTEEMLPGPPSPPKKSTPKLFGSSYPLSIAFIVVNEFCER. Ser9 carries the phosphoserine modification. At Thr12 the chain carries Phosphothreonine. At Ser28 the chain carries Phosphoserine. Residues 58-78 form a helical membrane-spanning segment; sequence FSYYGMKAVLTLYFLYFLHWN. At 79-87 the chain is on the extracellular side; it reads EDTSTSVYH. A helical transmembrane segment spans residues 88-108; sequence AFSSLCYFTPILGAAIADSWL. The Cytoplasmic segment spans residues 109–113; it reads GKFKT. A helical membrane pass occupies residues 114 to 134; it reads IIYLSLVYVLGHVFKSLGAIP. Over 135–139 the chain is Extracellular; sequence ILGGK. Residues 140–160 traverse the membrane as a helical segment; sequence MLHTILSLVGLSLIALGTGGI. Topologically, residues 161-183 are cytoplasmic; sequence KPCVAAFGGDQFEEEHAEARTRY. A helical membrane pass occupies residues 184-204; that stretch reads FSVFYLSINAGSLISTFITPM. Topologically, residues 205–217 are extracellular; that stretch reads LRGDVKCFGEDCY. A helical membrane pass occupies residues 218-238; that stretch reads ALAFGIPGLLMVLALVVFAMG. The Cytoplasmic segment spans residues 239 to 295; that stretch reads SKMYRKPPPEGNIVAQVTKCIWFAICNRFRNRSEDIPKRQHWLDWAAEKYPKHLIMD. A helical membrane pass occupies residues 296–316; it reads VKALTRILFLYIPLPMFWALL. Residues 317-343 lie on the Extracellular side of the membrane; the sequence is DQQGSRWTLQANKMDGDLGFFVLQPDQ. The chain crosses the membrane as a helical span at residues 344–364; that stretch reads MQVLNPFLVLVFIPLFDLVIY. Residues 365-380 lie on the Cytoplasmic side of the membrane; the sequence is RLISKCGVNFSSLRKM. A helical membrane pass occupies residues 381–401; it reads AVGMILACLAFAVAALVEIKI. Residues 402–611 lie on the Extracellular side of the membrane; the sequence is NGMIHPQPAS…PANKLSIAWQ (210 aa). Residues 402–611 form an extracellular domain (ECD) region; the sequence is NGMIHPQPAS…PANKLSIAWQ (210 aa). Asn448, Asn472, Asn528, and Asn587 each carry an N-linked (GlcNAc...) asparagine glycan. The chain crosses the membrane as a helical span at residues 612–632; that stretch reads LPQYVLVTAAEVMFSVTGLEF. The Cytoplasmic segment spans residues 633 to 643; sequence SYSQAPSSMKS. The helical transmembrane segment at 644-664 threads the bilayer; the sequence is VLQAAWLLTVAVGNIIVLIVA. Over 665 to 674 the chain is Extracellular; the sequence is QFSGLVQWAE. A helical membrane pass occupies residues 675 to 695; sequence FVLFSCLLLVVCLIFSVMGYY. Over 696-729 the chain is Cytoplasmic; it reads YVPLKSEGIHEATEKQIPHIQGNMINLETKNTRL.

Belongs to the major facilitator superfamily. Proton-dependent oligopeptide transporter (POT/PTR) (TC 2.A.17) family. As to quaternary structure, interacts (via extracellular domain region) with trypsin. In terms of tissue distribution, expressed in kidney brush border cells (at protein level). Highly expressed in macrophages.

The protein resides in the apical cell membrane. The protein localises to the cytoplasmic vesicle. It localises to the phagosome membrane. It is found in the cell membrane. The enzyme catalyses N-acetyl-D-muramoyl-L-alanyl-D-isoglutamine(out) + 3 H(+)(out) = N-acetyl-D-muramoyl-L-alanyl-D-isoglutamine(in) + 3 H(+)(in). It catalyses the reaction a dipeptide(out) + 2 H(+)(out) = a dipeptide(in) + 2 H(+)(in). The catalysed reaction is glycyl-L-leucine(out) + 2 H(+)(out) = glycyl-L-leucine(in) + 2 H(+)(in). It carries out the reaction glycyl-L-lysine(out) + 2 H(+)(out) = glycyl-L-lysine(in) + 2 H(+)(in). The enzyme catalyses glycyl-L-glutamate(out) + 3 H(+)(out) = glycyl-L-glutamate(in) + 3 H(+)(in). It catalyses the reaction L-alanyl-L-alanine(out) + 2 H(+)(out) = L-alanyl-L-alanine(in) + 2 H(+)(in). The catalysed reaction is an L-amino acid tripeptide(out) + 2 H(+)(out) = an L-amino acid tripeptide(in) + 2 H(+)(in). It carries out the reaction carnosine(out) + 2 H(+)(out) = carnosine(in) + 2 H(+)(in). Proton-coupled amino-acid transporter that transports oligopeptides of 2 to 4 amino acids with a preference for dipeptides. Transports neutral and anionic dipeptides with a proton to peptide stoichiometry of 2:1 or 3:1. In kidney, involved in the absorption of circulating di- and tripeptides from the glomerular filtrate. Can also transport beta-lactam antibiotics, such as the aminocephalosporin cefadroxil, and other antiviral and anticancer drugs. Transports the dipeptide-like aminopeptidase inhibitor bestatin. Also able to transport carnosine. Involved in innate immunity by promoting the detection of microbial pathogens by NOD-like receptors (NLRs). Mediates transport of bacterial peptidoglycans across the plasma membrane or, in macrophages, the phagosome membrane: catalyzes the transport of certain bacterial peptidoglycans, such as muramyl dipeptide (MDP), the NOD2 ligand. This chain is Solute carrier family 15 member 2, found in Mus musculus (Mouse).